Reading from the N-terminus, the 366-residue chain is Histone-lysine N-methyltransferase SETD7 (366 aa).

MORN repeat units follow at residues 36–58 (FEGN…DGST), 59–81 (LEGY…DGGV), and 106–128 (FKGQ…DGGS). One can recognise an SET domain in the interval 214–336 (ERVYVADSLI…AEEELTVAYG (123 aa)). S-adenosyl-L-methionine-binding positions include 226–228 (AGE), asparagine 296, histidine 297, and glutamate 356.

This sequence belongs to the class V-like SAM-binding methyltransferase superfamily. Histone-lysine methyltransferase family. SET7 subfamily. As to quaternary structure, interacts with IPF1/PDX-1.

The protein resides in the nucleus. It is found in the chromosome. The enzyme catalyses L-lysyl(4)-[histone H3] + S-adenosyl-L-methionine = N(6)-methyl-L-lysyl(4)-[histone H3] + S-adenosyl-L-homocysteine + H(+). The catalysed reaction is L-lysyl-[protein] + S-adenosyl-L-methionine = N(6)-methyl-L-lysyl-[protein] + S-adenosyl-L-homocysteine + H(+). Histone methyltransferase that specifically monomethylates 'Lys-4' of histone H3. H3 'Lys-4' methylation represents a specific tag for epigenetic transcriptional activation. Plays a central role in the transcriptional activation of genes such as collagenase or insulin. Recruited by IPF1/PDX-1 to the insulin promoter, leading to activate transcription. Also has methyltransferase activity toward non-histone proteins such as CGAS, p53/TP53, TAF10, and possibly TAF7 by recognizing and binding the [KR]-[STA]-K in substrate proteins. Monomethylates 'Lys-189' of TAF10, leading to increase the affinity of TAF10 for RNA polymerase II. Monomethylates 'Lys-372' of p53/TP53, stabilizing p53/TP53 and increasing p53/TP53-mediated transcriptional activation. Monomethylates 'Lys-491' of CGAS, promoting interaction between SGF29 and CGAS. This is Histone-lysine N-methyltransferase SETD7 (Setd7) from Mus musculus (Mouse).